A 196-amino-acid polypeptide reads, in one-letter code: Ribosome maturation factor RimP (196 aa).

The interval 164-196 (LAPQKPNKPGPKKPGHEKKKPSNESAAGKPRAE) is disordered. Residues 173 to 182 (GPKKPGHEKK) show a composition bias toward basic residues.

Belongs to the RimP family.

It localises to the cytoplasm. In terms of biological role, required for maturation of 30S ribosomal subunits. The chain is Ribosome maturation factor RimP from Xanthomonas euvesicatoria pv. vesicatoria (strain 85-10) (Xanthomonas campestris pv. vesicatoria).